The sequence spans 446 residues: Endoplasmic reticulum membrane adapter protein XK (446 aa).

At 1 to 2 (MK) the chain is on the cytoplasmic side. A helical transmembrane segment spans residues 3–23 (FPASVIASVFLFVAETAAALY). The Extracellular segment spans residues 24–37 (LSSTYRSAGDRMWQ). A helical transmembrane segment spans residues 38 to 58 (VLTLLFSLMPCALVQFTLLFV). Residues 59–68 (HRDLSRDRPL) lie on the Cytoplasmic side of the membrane. Residues 69–89 (ALLMHLLQLGPLYRCCEVFCI) traverse the membrane as a helical segment. Residues 90–140 (YCQSDQNEEPYVSITKKRQMPKDGLSEEVEKEVGQAEGKLITHRSAFSRAS) lie on the Extracellular side of the membrane. The residue at position 115 (Ser115) is a Phosphoserine. A helical transmembrane segment spans residues 141-161 (VIQAFLGSAPQLTLQLYITVL). The Cytoplasmic segment spans residues 162–171 (EQNITTGRCF). A helical transmembrane segment spans residues 172–192 (IMTLSLLSIVYGALRCNILAI). Residues 193–208 (KIKYDEYEVKVKPLAY) lie on the Extracellular side of the membrane. The helical transmembrane segment at 209–229 (VCIFLWRSFEIATRVIVLVLF) threads the bilayer. Residues 230-235 (TSVLKI) are Cytoplasmic-facing. The helical transmembrane segment at 236–256 (WVVAVILVNFFSFFLYPWIVF) threads the bilayer. The Extracellular portion of the chain corresponds to 257-277 (WCSGSPFPENIEKALSRVGTT). A helical membrane pass occupies residues 278–298 (IVLCFLTLLYAGINMFCWSAV). Residues 299–317 (QLKIDNPELISKSQNWYRL) are Cytoplasmic-facing. Residues 318 to 338 (LIYYMTRFIENSVLLLLWYFF) traverse the membrane as a helical segment. Residues 339–349 (KTDIYMYVCAP) are Extracellular-facing. Residues 350-370 (LLILQLLIGYCTGILFMLVFY) traverse the membrane as a helical segment. At 371-446 (QFFHPCKKLF…IWTAVDLCSA (76 aa)) the chain is on the cytoplasmic side.

This sequence belongs to the XK family. In terms of assembly, heterodimer with Kell; disulfide-linked. Interacts with VPS13A.

It is found in the endoplasmic reticulum membrane. Its function is as follows. Recruits the lipid transfer protein VPS13A from lipid droplets to the endoplasmic reticulum (ER) membrane. This Mus musculus (Mouse) protein is Endoplasmic reticulum membrane adapter protein XK.